Reading from the N-terminus, the 480-residue chain is Cysteine--tRNA ligase (480 aa).

Cys29 provides a ligand contact to Zn(2+). Positions 31 to 41 (PTVYADPHLGH) match the 'HIGH' region motif. The Zn(2+) site is built by Cys220, His245, and Glu249. The 'KMSKS' region motif lies at 276 to 280 (KMAKS). An ATP-binding site is contributed by Lys279.

It belongs to the class-I aminoacyl-tRNA synthetase family. In terms of assembly, monomer. Zn(2+) serves as cofactor.

The protein localises to the cytoplasm. The enzyme catalyses tRNA(Cys) + L-cysteine + ATP = L-cysteinyl-tRNA(Cys) + AMP + diphosphate. The chain is Cysteine--tRNA ligase from Thermus thermophilus (strain ATCC 27634 / DSM 579 / HB8).